Here is a 1697-residue protein sequence, read N- to C-terminus: Histone acetyltransferase HAC1 (1697 aa).

The span at 1–16 (MNVQAHMSGQVSNQGT) shows a compositional bias: polar residues. 6 disordered regions span residues 1–45 (MNVQ…LGPS), 202–221 (SNFG…QRNT), 385–439 (SFQA…QQQR), 555–574 (HWQS…SNER), 583–631 (RMSG…GNRD), and 843–901 (IGIA…GKPE). 2 stretches are compositionally biased toward low complexity: residues 17-28 (MSQQNGNSQMQN) and 202-217 (SNFG…SMSS). A compositionally biased stretch (polar residues) spans 385 to 398 (SFQAVSRTSSSLSH). The segment covering 399-439 (QQQQFQQQPNRFQQQPNQFHQQQQQFLHQQQLKQQSQQQQR) has biased composition (low complexity). Polar residues-rich tracts occupy residues 556–571 (WQSQ…NSMS) and 584–628 (MSGT…NGNG). Residues 629–709 (NRDPRFKNQQ…EPNCPVCIPV (81 aa)) form a TAZ-type 1 zinc finger. The segment covering 873 to 901 (TKVEKEPESLKKENLAESTEHTSKSGKPE) has biased composition (basic and acidic residues). A PHD-type zinc finger spans residues 989–1066 (HYFCIPCYNE…EYTCPYCFIA (78 aa)). The CBP/p300-type HAT domain occupies 1081–1517 (VLGAKDLPRT…VLYHLHNPTA (437 aa)). Residues 1204–1206 (LDS), 1223–1224 (RT), and Trp-1279 contribute to the acetyl-CoA site. ZZ-type zinc fingers lie at residues 1399-1462 (HLQP…IMDI) and 1519-1572 (AFVT…SLAD). Residues Cys-1404, Cys-1407, Cys-1419, Cys-1422, Cys-1428, Cys-1431, His-1444, His-1452, Cys-1524, Cys-1527, Cys-1539, Cys-1542, Cys-1548, Cys-1551, His-1560, and His-1562 each contribute to the Zn(2+) site. Residues 1579-1662 (EARQLRVLQL…ECHVPRCRDL (84 aa)) form a TAZ-type 2 zinc finger.

In terms of tissue distribution, rosette leaves, stems and flowers.

Its subcellular location is the nucleus. It catalyses the reaction L-lysyl-[protein] + acetyl-CoA = N(6)-acetyl-L-lysyl-[protein] + CoA + H(+). In terms of biological role, acetyltransferase enzyme. Acetylates histones, giving a specific tag for transcriptional activation. This chain is Histone acetyltransferase HAC1 (HAC1), found in Arabidopsis thaliana (Mouse-ear cress).